Reading from the N-terminus, the 461-residue chain is 3-deoxy-D-manno-octulosonic acid transferase (461 aa).

A helical; Signal-anchor transmembrane segment spans residues 2–22; sequence MLLYYTLSFILLPVYFIIIFI. The RPE1 insert domain maps to 47–88; the sequence is SALDFIQMSVNKEGFTDHKTTSYVDMHRNASLMYKLSLERSY. Residue Glu-102 is the Proton acceptor of the active site. Residues 306 to 307, 347 to 349, and 372 to 375 each bind CMP; these read PR, FGE, and NILE.

The protein belongs to the glycosyltransferase group 1 family. Glycosyltransferase 30 subfamily.

It is found in the cell inner membrane. The catalysed reaction is lipid IVA (E. coli) + CMP-3-deoxy-beta-D-manno-octulosonate = alpha-Kdo-(2-&gt;6)-lipid IVA (E. coli) + CMP + H(+). It functions in the pathway bacterial outer membrane biogenesis; LPS core biosynthesis. In terms of biological role, involved in lipopolysaccharide (LPS) biosynthesis. Catalyzes the transfer of 3-deoxy-D-manno-octulosonate (Kdo) residue(s) from CMP-Kdo to lipid IV(A), the tetraacyldisaccharide-1,4'-bisphosphate precursor of lipid A. This chain is 3-deoxy-D-manno-octulosonic acid transferase (waaA), found in Rickettsia prowazekii (strain Madrid E).